A 78-amino-acid polypeptide reads, in one-letter code: Probable [Fe-S]-dependent transcriptional repressor (78 aa).

Residues Cys56, Cys61, Cys64, and Cys70 each contribute to the iron-sulfur cluster site.

It belongs to the FeoC family.

In terms of biological role, may function as a transcriptional regulator that controls feoABC expression. This Cronobacter sakazakii (strain ATCC BAA-894) (Enterobacter sakazakii) protein is Probable [Fe-S]-dependent transcriptional repressor.